We begin with the raw amino-acid sequence, 83 residues long: Translation initiation factor IF-1 (83 aa).

Residues 1–72 (MAKEESIEMQ…TRGRIVYREA (72 aa)) form the S1-like domain.

Belongs to the IF-1 family. In terms of assembly, component of the 30S ribosomal translation pre-initiation complex which assembles on the 30S ribosome in the order IF-2 and IF-3, IF-1 and N-formylmethionyl-tRNA(fMet); mRNA recruitment can occur at any time during PIC assembly.

The protein resides in the cytoplasm. Its function is as follows. One of the essential components for the initiation of protein synthesis. Stabilizes the binding of IF-2 and IF-3 on the 30S subunit to which N-formylmethionyl-tRNA(fMet) subsequently binds. Helps modulate mRNA selection, yielding the 30S pre-initiation complex (PIC). Upon addition of the 50S ribosomal subunit IF-1, IF-2 and IF-3 are released leaving the mature 70S translation initiation complex. The sequence is that of Translation initiation factor IF-1 from Coxiella burnetii (strain Dugway 5J108-111).